Consider the following 426-residue polypeptide: Tol-Pal system protein TolB (426 aa).

Positions 1–25 (MSITPSLSRRTVMSLLAAGLSPAFA) are cleaved as a signal peptide.

This sequence belongs to the TolB family. The Tol-Pal system is composed of five core proteins: the inner membrane proteins TolA, TolQ and TolR, the periplasmic protein TolB and the outer membrane protein Pal. They form a network linking the inner and outer membranes and the peptidoglycan layer.

It is found in the periplasm. In terms of biological role, part of the Tol-Pal system, which plays a role in outer membrane invagination during cell division and is important for maintaining outer membrane integrity. The sequence is that of Tol-Pal system protein TolB from Polaromonas sp. (strain JS666 / ATCC BAA-500).